The following is a 59-amino-acid chain: Large ribosomal subunit protein bL32 (59 aa).

Residues 1-16 (MAVPKRKTSPSKRGMR) are compositionally biased toward basic residues. The interval 1–59 (MAVPKRKTSPSKRGMRRSADALKAPTYIEDKNSGELRRPHHIDLKTGMYRGRSVLPPKD) is disordered. Positions 28 to 44 (IEDKNSGELRRPHHIDL) are enriched in basic and acidic residues.

This sequence belongs to the bacterial ribosomal protein bL32 family.

The protein is Large ribosomal subunit protein bL32 of Bartonella quintana (strain Toulouse) (Rochalimaea quintana).